Reading from the N-terminus, the 428-residue chain is Enolase (428 aa).

Glutamine 162 serves as a coordination point for (2R)-2-phosphoglycerate. Catalysis depends on glutamate 204, which acts as the Proton donor. Mg(2+) is bound by residues aspartate 241, glutamate 286, and aspartate 313. (2R)-2-phosphoglycerate contacts are provided by lysine 338, arginine 367, serine 368, and lysine 389. Catalysis depends on lysine 338, which acts as the Proton acceptor.

This sequence belongs to the enolase family. Component of the RNA degradosome, a multiprotein complex involved in RNA processing and mRNA degradation. Mg(2+) is required as a cofactor.

The protein localises to the cytoplasm. The protein resides in the secreted. It is found in the cell surface. It carries out the reaction (2R)-2-phosphoglycerate = phosphoenolpyruvate + H2O. It participates in carbohydrate degradation; glycolysis; pyruvate from D-glyceraldehyde 3-phosphate: step 4/5. In terms of biological role, catalyzes the reversible conversion of 2-phosphoglycerate (2-PG) into phosphoenolpyruvate (PEP). It is essential for the degradation of carbohydrates via glycolysis. This chain is Enolase, found in Vesicomyosocius okutanii subsp. Calyptogena okutanii (strain HA).